The primary structure comprises 405 residues: BRCA1-A complex subunit Abraxas 1 (405 aa).

In terms of domain architecture, MPN spans Ser7–Leu153. Residues Ser208–Ile262 adopt a coiled-coil conformation. The interval Leu365–Phe405 is disordered. At Ser402 the chain carries Phosphoserine. Residues Ser402–Phe405 carry the pSXXF motif motif.

The protein belongs to the FAM175 family. Abraxas subfamily. As to quaternary structure, component of the BRCA1-A complex. Component of the BRISC complex. Homodimer. Interacts directly (when phosphorylated at Ser-402) with BRCA1. The phosphorylated homodimer can interact directly with two BRCA1 chains, giving rise to a heterotetramer. In terms of processing, phosphorylation of Ser-402 of the pSXXF motif by ATM or ATR constitutes a specific recognition motif for the BRCT domain of BRCA1.

The protein resides in the nucleus. In terms of biological role, involved in DNA damage response and double-strand break (DSB) repair. Component of the BRCA1-A complex, acting as a central scaffold protein that assembles the various components of the complex and mediates the recruitment of BRCA1. The BRCA1-A complex specifically recognizes 'Lys-63'-linked ubiquitinated histones H2A and H2AX at DNA lesion sites, leading to target the BRCA1-BARD1 heterodimer to sites of DNA damage at DSBs. This complex also possesses deubiquitinase activity that specifically removes 'Lys-63'-linked ubiquitin on histones H2A and H2AX. This Gallus gallus (Chicken) protein is BRCA1-A complex subunit Abraxas 1.